Consider the following 800-residue polypeptide: Nucleolar complex protein 3 homolog (800 aa).

Positions serine 37 to leucine 90 are disordered. Residues lysine 40 to glutamine 51 show a composition bias toward basic residues. Positions alanine 52–glutamate 77 are enriched in basic and acidic residues. Positions arginine 78 to leucine 90 are enriched in acidic residues. Lysine 333 is covalently cross-linked (Glycyl lysine isopeptide (Lys-Gly) (interchain with G-Cter in SUMO2)). A coiled-coil region spans residues phenylalanine 450–lysine 489.

This sequence belongs to the CBF/MAK21 family.

The protein localises to the nucleus. It is found in the nucleolus. The protein is Nucleolar complex protein 3 homolog (NOC3L) of Cricetulus griseus (Chinese hamster).